Consider the following 290-residue polypeptide: MTDHSEFDSVSGKTTTGHEWDGIKELNTPLPRWWVICFYLTIVWAIGYWIVYPAWPLISSNTTGLFGYSSRADVAVELANLEKIRGDKMAALGAASLADVEKDPALLALARAKGKTVFGDNCAPCHGSGGAGAKGFPNLNDDDWLWGGTLDQIMQTIQFGARSGHAKTHEGQMLAFGKDGVLKGDEIVTVANYVRSLSGLPTRKGYDAAKGEKIFVENCVACHGDGGKGNQEMGAPNLTDKIWLYGSDEAALIETISQGRAGVMPAWEGRLDPSTIKAMAVYVHSLGGGK.

Topologically, residues 1–32 (MTDHSEFDSVSGKTTTGHEWDGIKELNTPLPR) are cytoplasmic. The helical transmembrane segment at 33–53 (WWVICFYLTIVWAIGYWIVYP) threads the bilayer. Residues 54 to 290 (AWPLISSNTT…VYVHSLGGGK (237 aa)) are Periplasmic-facing. Cytochrome c domains lie at 109–198 (LARA…RSLS) and 206–287 (YDAA…HSLG). The heme c site is built by Cys122, Cys125, His126, Met173, Cys219, Cys222, His223, and Met264.

Belongs to the CcoP / FixP family. As to quaternary structure, component of the cbb3-type cytochrome c oxidase at least composed of FixN, FixO, FixQ and FixP. Heme c serves as cofactor.

The protein localises to the cell inner membrane. It functions in the pathway energy metabolism; oxidative phosphorylation. Functionally, C-type cytochrome. Part of the cbb3-type cytochrome c oxidase complex. FixP subunit is required for transferring electrons from donor cytochrome c via its heme groups to FixO subunit. From there, electrons are shuttled to the catalytic binuclear center of FixN subunit where oxygen reduction takes place. The complex also functions as a proton pump. The polypeptide is Cbb3-type cytochrome c oxidase subunit FixP (Bradyrhizobium diazoefficiens (strain JCM 10833 / BCRC 13528 / IAM 13628 / NBRC 14792 / USDA 110)).